The primary structure comprises 447 residues: Probable aspartic protease At2g35615 (447 aa).

Positions 1–20 (MATQILLCFFLFFSVTLSSS) are cleaved as a signal peptide. Residue Asn-25 is glycosylated (N-linked (GlcNAc...) asparagine). The 355-residue stretch at 85–439 (FFMSITIGTP…DLETRTVSFQ (355 aa)) folds into the Peptidase A1 domain. Residue Asp-103 is part of the active site. A glycan (N-linked (GlcNAc...) asparagine) is linked at Asn-251. Asp-326 is an active-site residue.

This sequence belongs to the peptidase A1 family.

The protein localises to the secreted. This chain is Probable aspartic protease At2g35615, found in Arabidopsis thaliana (Mouse-ear cress).